A 423-amino-acid polypeptide reads, in one-letter code: T-box transcription factor T-A (423 aa).

The segment at residues Leu44 to Asp212 is a DNA-binding region (T-box). A compositionally biased stretch (basic and acidic residues) spans Glu215 to Thr227. Disordered regions lie at residues Glu215–Tyr234 and Ala280–Ser304. Over residues Arg290 to Ser304 the composition is skewed to polar residues.

In terms of assembly, monomer. Binds DNA as a monomer. First expressed at the dorsal side of the blastula embryo. Expressed in the germ ring, shield and chordamesoderm during gastrulation and is restricted to the notochord and tailbud during somitogenesis (at protein level).

Its subcellular location is the nucleus. Involved in the transcriptional regulation of genes required for mesoderm differentiation, including itself. Indispensable for the formation of the notochord and the tail structure. Functions together with tbx16/spadetail in development of trunk and tail mesoderm. Functions by itself early in development to repress medial floor plate and promote notochord fate but at later times, functions together with tbx16/spadetail to promote medial floor plate formation. Acts in a parallel pathway to, but cooperates with, non-canonical wnt-signaling during tail formation. Required for the morphogenesis of Kupffer's vesicle and regulates left-right asymmetry. This is T-box transcription factor T-A (tbxta) from Danio rerio (Zebrafish).